Consider the following 186-residue polypeptide: UPF0301 protein Saro_0683 (186 aa).

This sequence belongs to the UPF0301 (AlgH) family.

This Novosphingobium aromaticivorans (strain ATCC 700278 / DSM 12444 / CCUG 56034 / CIP 105152 / NBRC 16084 / F199) protein is UPF0301 protein Saro_0683.